A 191-amino-acid polypeptide reads, in one-letter code: LHFPL tetraspan subfamily member 7 protein (191 aa).

Transmembrane regions (helical) follow at residues 6–26, 72–92, 112–132, and 154–174; these read MGSL…FSLM, IAAV…VLVL, YAQI…PFNL, and LGWG…LPFI.

It belongs to the TMEM211 family.

Its subcellular location is the membrane. This is LHFPL tetraspan subfamily member 7 protein (lhfpl7) from Xenopus tropicalis (Western clawed frog).